The following is a 369-amino-acid chain: Phenylalanine--tRNA ligase alpha subunit (369 aa).

Glu269 is a Mg(2+) binding site.

The protein belongs to the class-II aminoacyl-tRNA synthetase family. Phe-tRNA synthetase alpha subunit type 1 subfamily. In terms of assembly, tetramer of two alpha and two beta subunits. It depends on Mg(2+) as a cofactor.

It localises to the cytoplasm. It carries out the reaction tRNA(Phe) + L-phenylalanine + ATP = L-phenylalanyl-tRNA(Phe) + AMP + diphosphate + H(+). The sequence is that of Phenylalanine--tRNA ligase alpha subunit from Brucella ovis (strain ATCC 25840 / 63/290 / NCTC 10512).